The chain runs to 258 residues: NAD kinase (258 aa).

The Proton acceptor role is filled by aspartate 51. NAD(+) contacts are provided by residues 51-52 (DG), arginine 56, 119-120 (ND), lysine 130, aspartate 149, 160-165 (TAYSLS), and alanine 184.

It belongs to the NAD kinase family. Requires a divalent metal cation as cofactor.

It localises to the cytoplasm. It catalyses the reaction NAD(+) + ATP = ADP + NADP(+) + H(+). In terms of biological role, involved in the regulation of the intracellular balance of NAD and NADP, and is a key enzyme in the biosynthesis of NADP. Catalyzes specifically the phosphorylation on 2'-hydroxyl of the adenosine moiety of NAD to yield NADP. The protein is NAD kinase of Thermotoga neapolitana (strain ATCC 49049 / DSM 4359 / NBRC 107923 / NS-E).